A 532-amino-acid chain; its full sequence is Apoptosis-inducing factor 1, mitochondrial (532 aa).

Residues 1 to 26 (MIRNLTKLTKFTIGNRFYQSSSKGRF) constitute a mitochondrion transit peptide. Residues 63-84 (STPSIDVKEKKSQPPKTKEDYQ) form a disordered region. Residues 98 to 440 (YVIIGGGTAA…APYTYQPFFW (343 aa)) form an FAD-dependent oxidoreductase region. Residues 102–106 (GGGTA), 128–129 (KE), Arg-136, and Lys-141 each bind FAD. Trp-160 provides a ligand contact to NAD(+). Residues Val-188 and Arg-236 each coordinate FAD. NAD(+) contacts are provided by residues 260–263 (GGFL), Glu-288, and Gly-353. Asp-392 lines the FAD pocket. The Nuclear localization signal signature appears at 400-406 (SLGVRRR). NAD(+) contacts are provided by residues 408–409 (EH), Trp-440, and Glu-450. Residues 409 to 410 (HH) and Trp-440 contribute to the FAD site.

It belongs to the FAD-dependent oxidoreductase family. FAD is required as a cofactor.

The protein localises to the mitochondrion. It localises to the cytoplasm. Its subcellular location is the nucleus. It catalyses the reaction A + NADH + H(+) = AH2 + NAD(+). Probable NADH oxidoreductase that acts as a caspase-independent mitochondrial effector of apoptotic cell death. This Dictyostelium discoideum (Social amoeba) protein is Apoptosis-inducing factor 1, mitochondrial (aif).